The primary structure comprises 311 residues: Cell division protein FtsQ (311 aa).

The disordered stretch occupies residues 1 to 28 (MTTRSPARPLIARRSTPAPTPAPHDPAP). Over 1 to 46 (MTTRSPARPLIARRSTPAPTPAPHDPAPSRLSYRVTRLWLTPIFRK) the chain is Cytoplasmic. The helical transmembrane segment at 47–67 (ALHLGIPVFALFAAVTWYLGD) threads the bilayer. Residues 68 to 311 (ETRVAELFEA…AERPDGDTRG (244 aa)) are Periplasmic-facing. Positions 91 to 159 (FRVNVLGIDG…GYLAVRIDER (69 aa)) constitute a POTRA domain.

This sequence belongs to the FtsQ/DivIB family. FtsQ subfamily.

Its subcellular location is the cell inner membrane. Functionally, essential cell division protein. In Jannaschia sp. (strain CCS1), this protein is Cell division protein FtsQ.